A 344-amino-acid polypeptide reads, in one-letter code: Thioredoxin domain-containing protein 15 (344 aa).

The first 20 residues, 1-20 (MQLLCWWQVLLWVLGLPAHG), serve as a signal peptide directing secretion. The Extracellular portion of the chain corresponds to 21–305 (LEVAEDSGHP…GPLPSTLIKT (285 aa)). Disordered regions lie at residues 55–119 (DHRD…FGLQ) and 136–156 (GVTE…SLKS). Basic and acidic residues predominate over residues 88-97 (EDQRSPEAHD). The region spanning 163–280 (ERNVTGLENF…LKIFIFNQTG (118 aa)) is the Thioredoxin domain. N-linked (GlcNAc...) asparagine glycosylation is found at asparagine 171, asparagine 178, asparagine 190, and asparagine 277. Residues 306-326 (VDWLLVFSLFFLISFIMYATI) form a helical membrane-spanning segment. The Cytoplasmic segment spans residues 327-344 (RTESIRWLIPGQEQEHAE).

The protein resides in the cell projection. Its subcellular location is the cilium membrane. In terms of biological role, acts as a positive regulator of ciliary hedgehog signaling. Required for cilia biogenesis. This is Thioredoxin domain-containing protein 15 (Txndc15) from Mus musculus (Mouse).